We begin with the raw amino-acid sequence, 368 residues long: MPIARERKARLENAMSRKKTGLSYADAGVDIDAGNALVEKIKPLVRATRRPGADGEIGGFGGLFDLKAAGFTDPILIAANDGVGTKLKVAIEAGKHDTVGIDLVAMCVNDLVVQGAEPLFFLDYFATGKLDPDQGAAIVAGIAEGCRQAGCALIGGETAEMPGMYRDGDYDLAGFAVGAAERGRLLPTNDIVEGDVILGLASTGVHSNGFSLVRRIVEVSGLDWNDPAPFDSDRSLAEALLTPTRIYVKPILSAIARTHGIKALAHITGGGFPENIPRVLPPAYAAEIDLEAVNVLPVFSWLAERGGVAAQEMLRTFNCGIGMIAVVAAGQAAQVAAVLQKEGEHVEILGSIVPRRDKGVIYQGALEL.

It belongs to the AIR synthase family.

Its subcellular location is the cytoplasm. It carries out the reaction 2-formamido-N(1)-(5-O-phospho-beta-D-ribosyl)acetamidine + ATP = 5-amino-1-(5-phospho-beta-D-ribosyl)imidazole + ADP + phosphate + H(+). The protein operates within purine metabolism; IMP biosynthesis via de novo pathway; 5-amino-1-(5-phospho-D-ribosyl)imidazole from N(2)-formyl-N(1)-(5-phospho-D-ribosyl)glycinamide: step 2/2. The chain is Phosphoribosylformylglycinamidine cyclo-ligase from Chelativorans sp. (strain BNC1).